A 249-amino-acid polypeptide reads, in one-letter code: Octanoyltransferase (249 aa).

The region spanning 53–234 (PDTDDEIWVV…RLIAHLDGAT (182 aa)) is the BPL/LPL catalytic domain. Substrate contacts are provided by residues 93–100 (RGGQITYH), 165–167 (ALG), and 178–180 (GLS). Cysteine 196 acts as the Acyl-thioester intermediate in catalysis.

It belongs to the LipB family.

It localises to the cytoplasm. It catalyses the reaction octanoyl-[ACP] + L-lysyl-[protein] = N(6)-octanoyl-L-lysyl-[protein] + holo-[ACP] + H(+). The protein operates within protein modification; protein lipoylation via endogenous pathway; protein N(6)-(lipoyl)lysine from octanoyl-[acyl-carrier-protein]: step 1/2. In terms of biological role, catalyzes the transfer of endogenously produced octanoic acid from octanoyl-acyl-carrier-protein onto the lipoyl domains of lipoate-dependent enzymes. Lipoyl-ACP can also act as a substrate although octanoyl-ACP is likely to be the physiological substrate. This chain is Octanoyltransferase, found in Burkholderia mallei (strain NCTC 10247).